We begin with the raw amino-acid sequence, 211 residues long: Protein-L-isoaspartate O-methyltransferase (211 aa).

Residue Ser60 is part of the active site.

This sequence belongs to the methyltransferase superfamily. L-isoaspartyl/D-aspartyl protein methyltransferase family.

The protein resides in the cytoplasm. It carries out the reaction [protein]-L-isoaspartate + S-adenosyl-L-methionine = [protein]-L-isoaspartate alpha-methyl ester + S-adenosyl-L-homocysteine. Its function is as follows. Catalyzes the methyl esterification of L-isoaspartyl residues in peptides and proteins that result from spontaneous decomposition of normal L-aspartyl and L-asparaginyl residues. It plays a role in the repair and/or degradation of damaged proteins. The polypeptide is Protein-L-isoaspartate O-methyltransferase (Pseudomonas fluorescens (strain SBW25)).